Consider the following 140-residue polypeptide: Encapsulated ferritin-like protein (140 aa).

Glu-31 lines the Ca(2+) pocket. Glu-32 serves as a coordination point for Fe cation. Position 34 (Glu-34) interacts with Ca(2+). The Fe cation site is built by Glu-62 and His-65. The disordered stretch occupies residues 100-140 (ADTAGEGSGGDAAKGATAQGDGSLGIGSLKGEAALARPPRL). The targeting peptide stretch occupies residues 100–140 (ADTAGEGSGGDAAKGATAQGDGSLGIGSLKGEAALARPPRL).

This sequence belongs to the ferritin-like superfamily. EncFtn family. Monomers form antiparallel dimers which assemble in a decameric ring 7 nm in diameter and 4.5 nm thick with a central channel (construct without targeting peptide). Growth in Fe(2+)-rich medium induces oligomerization, the monomer does not bind metals. The target peptide probably extends away from the ring, to allow binding to the interior of the encapsulin nanocompartment shell. Fe(2+) serves as cofactor. The cofactor is Ca(2+).

The protein localises to the encapsulin nanocompartment. It carries out the reaction 4 Fe(2+) + O2 + 4 H(+) = 4 Fe(3+) + 2 H2O. Its activity is regulated as follows. Ferroxidase activity inhibited by Zn(2+). Mutants at Glu-31, Glu-34 and Trp-38 are also inhibited by Zn(2+). Functionally, cargo protein of a type 1 encapsulin nanocompartment. A ferritin-like ferroxidase that mineralizes iron inside the encapsulin nanocompartment. Converts Fe(2+) to Fe(3+) that is released to the exterior of the decameric complex for deposition in the encapsulin nanocompartment. In solution the decamer binds 10-15 iron cations; in the encapsulin nanocompartment the decamer can bind up to 48 ions, perhaps via its internal channel and on its exterior. The empty encapsulin nanocompartment sequesters about 2200 Fe ions while the cargo-loaded nanocompartment can maximally sequester about 4150 Fe ions. EncFtn retains ferroxidase activity when encapsulated. Flux in the active site di-iron metal center is thought to be controlled by the 'entry site' of the protein, which both attracts metal and controls the rate of iron oxidation. Encapsulation in the nanocompartment does not alter either function of this protein. The polypeptide is Encapsulated ferritin-like protein (Rhodospirillum rubrum (strain ATCC 11170 / ATH 1.1.1 / DSM 467 / LMG 4362 / NCIMB 8255 / S1)).